We begin with the raw amino-acid sequence, 197 residues long: Holliday junction resolvase RecU (197 aa).

Residues 1–21 (MVNYPSGVRAGGYPQKKKNQN) form a disordered region. Positions 82, 84, 97, and 116 each coordinate Mg(2+).

It belongs to the RecU family. Mg(2+) serves as cofactor.

The protein resides in the cytoplasm. The catalysed reaction is Endonucleolytic cleavage at a junction such as a reciprocal single-stranded crossover between two homologous DNA duplexes (Holliday junction).. Functionally, endonuclease that resolves Holliday junction intermediates in genetic recombination. Cleaves mobile four-strand junctions by introducing symmetrical nicks in paired strands. Promotes annealing of linear ssDNA with homologous dsDNA. Required for DNA repair, homologous recombination and chromosome segregation. This is Holliday junction resolvase RecU from Oenococcus oeni (strain ATCC BAA-331 / PSU-1).